The following is a 216-amino-acid chain: Transmembrane protein 125 (216 aa).

A run of 4 helical transmembrane segments spans residues 32–52 (LLCFSVAVILVAGCGAGGVAL), 65–85 (LAVGTVLCLLALLVLVKQLMS), 111–131 (AVVVLLSGFVLLVTGLTLAGL), and 144–164 (MLSVGITLASLGSVLLLGLLL).

It is found in the membrane. This is Transmembrane protein 125 (Tmem125) from Mus musculus (Mouse).